Consider the following 381-residue polypeptide: CCN family member 1 (381 aa).

The N-terminal stretch at 1–24 (MSSRIARALALVVTLLHLTRLALS) is a signal peptide. The IGFBP N-terminal domain occupies 25–94 (TCPAACHCPL…TALKGICRAQ (70 aa)). 6 disulfide bridges follow: cysteine 26–cysteine 50, cysteine 30–cysteine 52, cysteine 32–cysteine 53, cysteine 39–cysteine 56, cysteine 64–cysteine 78, and cysteine 70–cysteine 91. Positions 98 to 164 (RPCEYNSRIY…GQCCEEWVCD (67 aa)) constitute a VWFC domain. Serine 188 is subject to Phosphoserine. In terms of domain architecture, TSP type-1 spans 228-273 (KCIVQTTSWSQCSKTCGTGISTRVTNDNPECRLVKETRICEVRPCG). The heparin-binding stretch occupies residues 279–315 (SLKKGKKCSKTKKSPEPVRFTYAGCLSVKKYRPKYCG). Intrachain disulfides connect cysteine 286/cysteine 323, cysteine 303/cysteine 337, cysteine 314/cysteine 353, cysteine 317/cysteine 355, and cysteine 322/cysteine 359. The region spanning 286 to 360 (CSKTKKSPEP…QSCKCNYNCP (75 aa)) is the CTCK domain.

It belongs to the CCN family. Interaction with integrins is heparin- and cell-type-dependent and promotes cell adhesion.

It is found in the secreted. Promotes cell proliferation, chemotaxis, angiogenesis and cell adhesion. Appears to play a role in wound healing by up-regulating, in skin fibroblasts, the expression of a number of genes involved in angiogenesis, inflammation and matrix remodeling including VEGA-A, VEGA-C, MMP1, MMP3, TIMP1, uPA, PAI-1 and integrins alpha-3 and alpha-5. CCN1-mediated gene regulation is dependent on heparin-binding. Down-regulates the expression of alpha-1 and alpha-2 subunits of collagen type-1. Promotes cell adhesion and adhesive signaling through integrin alpha-6/beta-1, cell migration through integrin alpha-1/beta-5 and cell proliferation through integrin alpha-v/beta-3. The protein is CCN family member 1 (CCN1) of Pan troglodytes (Chimpanzee).